The primary structure comprises 145 residues: uncharacterized protein (145 aa).

A helical membrane pass occupies residues Ile104 to Leu124.

The protein localises to the membrane. This is an uncharacterized protein from Saccharomyces cerevisiae (strain ATCC 204508 / S288c) (Baker's yeast).